The primary structure comprises 277 residues: Bifunctional protein FolD 1 (277 aa).

Residues 162–164 (GDS) and Ser-187 each bind NADP(+).

It belongs to the tetrahydrofolate dehydrogenase/cyclohydrolase family. In terms of assembly, homodimer.

It catalyses the reaction (6R)-5,10-methylene-5,6,7,8-tetrahydrofolate + NADP(+) = (6R)-5,10-methenyltetrahydrofolate + NADPH. The enzyme catalyses (6R)-5,10-methenyltetrahydrofolate + H2O = (6R)-10-formyltetrahydrofolate + H(+). Its pathway is one-carbon metabolism; tetrahydrofolate interconversion. In terms of biological role, catalyzes the oxidation of 5,10-methylenetetrahydrofolate to 5,10-methenyltetrahydrofolate and then the hydrolysis of 5,10-methenyltetrahydrofolate to 10-formyltetrahydrofolate. This chain is Bifunctional protein FolD 1, found in Syntrophomonas wolfei subsp. wolfei (strain DSM 2245B / Goettingen).